A 383-amino-acid polypeptide reads, in one-letter code: Aliphatic nitrilase (383 aa).

One can recognise a CN hydrolase domain in the interval 13-288; that stretch reads VKVATVQAEP…EGLLYAELDL (276 aa). Catalysis depends on E53, which acts as the Proton acceptor. K136 acts as the Proton donor in catalysis. Catalysis depends on C170, which acts as the Nucleophile. Positions 359–383 are disordered; the sequence is ATLPLDAPAPAPAPEQKSGRAKAEA.

The protein belongs to the carbon-nitrogen hydrolase superfamily. Nitrilase family.

It carries out the reaction an aliphatic nitrile + 2 H2O = a carboxylate + NH4(+). Functionally, acts on aliphatic nitriles such as acrylonitrile, crotononitrile and glutaronitrile. This chain is Aliphatic nitrilase, found in Rhodococcus rhodochrous.